A 311-amino-acid polypeptide reads, in one-letter code: Serine hydrolase-like protein (311 aa).

The AB hydrolase-1 domain occupies 27–227; it reads PPVLCLHGWL…FVSKEMFVHS (201 aa). The active site involves Ser-102. Residue Ser-210 is modified to Phosphoserine.

Belongs to the AB hydrolase superfamily. As to expression, ubiquitous. High protein expression in skeletal and cardiac muscle.

The protein localises to the cytoplasm. Its subcellular location is the perinuclear region. It localises to the peroxisome. Its function is as follows. Probable serine hydrolase. May be related to cell muscle hypertrophy. This Mus musculus (Mouse) protein is Serine hydrolase-like protein (Serhl).